Reading from the N-terminus, the 155-residue chain is 6,7-dimethyl-8-ribityllumazine synthase (155 aa).

5-amino-6-(D-ribitylamino)uracil-binding positions include F22, 56–58 (AFE), and 80–82 (AVI). 85–86 (ST) is a (2S)-2-hydroxy-3-oxobutyl phosphate binding site. The active-site Proton donor is H88. F113 is a binding site for 5-amino-6-(D-ribitylamino)uracil. Residue R127 participates in (2S)-2-hydroxy-3-oxobutyl phosphate binding.

This sequence belongs to the DMRL synthase family.

It carries out the reaction (2S)-2-hydroxy-3-oxobutyl phosphate + 5-amino-6-(D-ribitylamino)uracil = 6,7-dimethyl-8-(1-D-ribityl)lumazine + phosphate + 2 H2O + H(+). The protein operates within cofactor biosynthesis; riboflavin biosynthesis; riboflavin from 2-hydroxy-3-oxobutyl phosphate and 5-amino-6-(D-ribitylamino)uracil: step 1/2. Its function is as follows. Catalyzes the formation of 6,7-dimethyl-8-ribityllumazine by condensation of 5-amino-6-(D-ribitylamino)uracil with 3,4-dihydroxy-2-butanone 4-phosphate. This is the penultimate step in the biosynthesis of riboflavin. The sequence is that of 6,7-dimethyl-8-ribityllumazine synthase from Caldicellulosiruptor bescii (strain ATCC BAA-1888 / DSM 6725 / KCTC 15123 / Z-1320) (Anaerocellum thermophilum).